A 105-amino-acid chain; its full sequence is Large ribosomal subunit protein eL42 (105 aa).

A disordered region spans residues 23 to 61 (KVTQYKKGKESKFAQGRRRYDRKQSGFGGQTKPIFRKKA).

It belongs to the eukaryotic ribosomal protein eL42 family.

This Caenorhabditis elegans protein is Large ribosomal subunit protein eL42.